The primary structure comprises 729 residues: Fatty acid oxidation complex subunit alpha (729 aa).

Positions 1–189 (MLYQGETLQL…KVGLVDAVVA (189 aa)) are enoyl-CoA hydratase/isomerase. Asp-296 lines the substrate pocket. The 3-hydroxyacyl-CoA dehydrogenase stretch occupies residues 311-729 (EAPKQAAVLG…LSDVSTGQPA (419 aa)). NAD(+)-binding positions include Met-324, Asp-343, 400-402 (VVE), Lys-407, and Ser-429. The active-site For 3-hydroxyacyl-CoA dehydrogenase activity is His-450. Asn-453 is a binding site for NAD(+). Asn-500 and Tyr-660 together coordinate substrate.

In the N-terminal section; belongs to the enoyl-CoA hydratase/isomerase family. This sequence in the C-terminal section; belongs to the 3-hydroxyacyl-CoA dehydrogenase family. In terms of assembly, heterotetramer of two alpha chains (FadB) and two beta chains (FadA).

It catalyses the reaction a (3S)-3-hydroxyacyl-CoA + NAD(+) = a 3-oxoacyl-CoA + NADH + H(+). The enzyme catalyses a (3S)-3-hydroxyacyl-CoA = a (2E)-enoyl-CoA + H2O. It carries out the reaction a 4-saturated-(3S)-3-hydroxyacyl-CoA = a (3E)-enoyl-CoA + H2O. The catalysed reaction is (3S)-3-hydroxybutanoyl-CoA = (3R)-3-hydroxybutanoyl-CoA. It catalyses the reaction a (3Z)-enoyl-CoA = a 4-saturated (2E)-enoyl-CoA. The enzyme catalyses a (3E)-enoyl-CoA = a 4-saturated (2E)-enoyl-CoA. The protein operates within lipid metabolism; fatty acid beta-oxidation. Functionally, involved in the aerobic and anaerobic degradation of long-chain fatty acids via beta-oxidation cycle. Catalyzes the formation of 3-oxoacyl-CoA from enoyl-CoA via L-3-hydroxyacyl-CoA. It can also use D-3-hydroxyacyl-CoA and cis-3-enoyl-CoA as substrate. The sequence is that of Fatty acid oxidation complex subunit alpha from Serratia proteamaculans (strain 568).